We begin with the raw amino-acid sequence, 448 residues long: Trigger factor (448 aa).

One can recognise a PPIase FKBP-type domain in the interval 172 to 257 (GDRVTVDFVG…MKKIEWPHLP (86 aa)).

Belongs to the FKBP-type PPIase family. Tig subfamily.

The protein localises to the cytoplasm. The catalysed reaction is [protein]-peptidylproline (omega=180) = [protein]-peptidylproline (omega=0). Involved in protein export. Acts as a chaperone by maintaining the newly synthesized protein in an open conformation. Functions as a peptidyl-prolyl cis-trans isomerase. The protein is Trigger factor of Paraburkholderia xenovorans (strain LB400).